The following is a 2534-amino-acid chain: Highly reducing polyketide synthase easB (2534 aa).

A disordered region spans residues Met1–Leu49. Positions Leu49–Ala470 constitute a Ketosynthase family 3 (KS3) domain. Residues Cys222, His356, and His396 each act as for beta-ketoacyl synthase activity in the active site. The malonyl-CoA:ACP transacylase (MAT) domain stretch occupies residues Ile587–Lys885. The interval His973–Val1111 is N-terminal hotdog fold. Residues His973–Gly1273 form a dehydratase (DH) domain region. The 305-residue stretch at His973 to Ala1277 folds into the PKS/mFAS DH domain. The active-site Proton acceptor; for dehydratase activity is His1005. The tract at residues Thr1131–Ala1277 is C-terminal hotdog fold. The Proton donor; for dehydratase activity role is filled by Asp1193. The tract at residues Lys1395–Arg1625 is methyltransferase (CMet) domain. Residues Gly1834 to Leu2146 are enoyl reductase (ER) domain. The Carrier domain occupies Glu2452–Ser2529. Residues Ala2453–Ala2526 are ketoreductase (KR) domain. At Ser2489 the chain carries O-(pantetheine 4'-phosphoryl)serine.

The protein operates within antibiotic biosynthesis. In terms of biological role, polyketide synthase; part of the gene cluster that mediates the biosynthesis of emericellamides, secondary metabolites acting as antibiotics. The biosynthesis of emericellamides initiates from the highly reducing polyketide synthase easB which catalyzes the formation of the linear polyketide chain. EasB produces several polyketides that can be further processed by the downstream enzymes. The polyketides are released from easB as linear polyketide carboxylic acids, which are converted to CoA thioesters by the acyl-CoA ligase easD. The substrates are then loaded onto the acyltransferase easC, which shuttles them to the first thiolation (T) domain of the nonribosomal peptide synthetase easA. EasA then performs condensation of the polyketides with one glycine, two alanine, one valine and one leucine residues. A last step of cyclization leads to the production of emericellamides. The protein is Highly reducing polyketide synthase easB of Emericella nidulans (strain FGSC A4 / ATCC 38163 / CBS 112.46 / NRRL 194 / M139) (Aspergillus nidulans).